The sequence spans 298 residues: Acetylglutamate kinase (298 aa).

Substrate contacts are provided by residues 69-70, Arg-91, and Asn-196; that span reads GG.

It belongs to the acetylglutamate kinase family. ArgB subfamily.

It is found in the cytoplasm. It carries out the reaction N-acetyl-L-glutamate + ATP = N-acetyl-L-glutamyl 5-phosphate + ADP. It participates in amino-acid biosynthesis; L-arginine biosynthesis; N(2)-acetyl-L-ornithine from L-glutamate: step 2/4. Catalyzes the ATP-dependent phosphorylation of N-acetyl-L-glutamate. This is Acetylglutamate kinase from Rhodopseudomonas palustris (strain BisA53).